Consider the following 129-residue polypeptide: Glycine cleavage system H protein (129 aa).

Residues 24–106 enclose the Lipoyl-binding domain; sequence IATIGISAFA…YGEGWLVKVR (83 aa). Lys-65 is modified (N6-lipoyllysine).

It belongs to the GcvH family. The glycine cleavage system is composed of four proteins: P, T, L and H. Requires (R)-lipoate as cofactor.

The glycine cleavage system catalyzes the degradation of glycine. The H protein shuttles the methylamine group of glycine from the P protein to the T protein. In Cyanothece sp. (strain PCC 7425 / ATCC 29141), this protein is Glycine cleavage system H protein.